A 279-amino-acid chain; its full sequence is Shikimate dehydrogenase (NADP(+)) (279 aa).

Residues 17–19 (SQS) and threonine 64 each bind shikimate. The Proton acceptor role is filled by lysine 68. Shikimate-binding residues include asparagine 89 and aspartate 105. NADP(+) is bound by residues 130 to 134 (GAGGA) and leucine 218. Tyrosine 220 provides a ligand contact to shikimate. An NADP(+)-binding site is contributed by glycine 242.

This sequence belongs to the shikimate dehydrogenase family. Homodimer.

The catalysed reaction is shikimate + NADP(+) = 3-dehydroshikimate + NADPH + H(+). The protein operates within metabolic intermediate biosynthesis; chorismate biosynthesis; chorismate from D-erythrose 4-phosphate and phosphoenolpyruvate: step 4/7. Its function is as follows. Involved in the biosynthesis of the chorismate, which leads to the biosynthesis of aromatic amino acids. Catalyzes the reversible NADPH linked reduction of 3-dehydroshikimate (DHSA) to yield shikimate (SA). This chain is Shikimate dehydrogenase (NADP(+)), found in Methylococcus capsulatus (strain ATCC 33009 / NCIMB 11132 / Bath).